The sequence spans 292 residues: Probable ABC transporter permease protein PH1215 (292 aa).

A run of 6 helical transmembrane segments spans residues 10-30 (IILFLIPALILIGIFVYFAVV), 72-92 (LLLILLFVPGSLLLGLFLAIL), 106-126 (IYVLPFALSFVVTATLWAWMY), 160-180 (IIIALIWQFSGYTMIIYLAGI), 215-235 (LSAFVVLMVFSLKAFDFIWVL), and 261-281 (FAYGAAIATILLLMALVVVLP). Residues 68 to 284 (LRNNLLLILL…ALVVVLPYLY (217 aa)) form the ABC transmembrane type-1 domain.

Belongs to the binding-protein-dependent transport system permease family. MalFG subfamily.

It is found in the cell membrane. Probably part of a binding-protein-dependent transport system PH1214/15/16. Probably responsible for the translocation of the substrate across the membrane. This chain is Probable ABC transporter permease protein PH1215, found in Pyrococcus horikoshii (strain ATCC 700860 / DSM 12428 / JCM 9974 / NBRC 100139 / OT-3).